A 666-amino-acid polypeptide reads, in one-letter code: Putative cysteine-rich receptor-like protein kinase 20 (666 aa).

The first 23 residues, 1–23, serve as a signal peptide directing secretion; sequence MSSLICFIFLFLFSFITSFTASA. Residues 24 to 264 lie on the Extracellular side of the membrane; it reads QNPFYLYHNC…PRPGKGGNSS (241 aa). 2 Gnk2-homologous domains span residues 27–131 and 137–241; these read FYLY…NRNI and TDGG…NYEF. N-linked (GlcNAc...) asparagine glycans are attached at residues N32, N42, N60, N69, and N103. N262 carries an N-linked (GlcNAc...) asparagine glycan. Residues 265–285 form a helical membrane-spanning segment; the sequence is VIVIAVVVPITVLFLLFVAFF. Over 286-666 the chain is Cytoplasmic; it reads SVRRAKRKKT…EASITSVAPR (381 aa). The region spanning 344 to 623 is the Protein kinase domain; sequence FLPINKLGQG…QMLTTSSIAL (280 aa). ATP-binding positions include 350–358 and K372; that span reads LGQGGFGEV. Y417 bears the Phosphotyrosine mark. Residue D469 is the Proton acceptor of the active site. T509 bears the Phosphothreonine mark. At Y517 the chain carries Phosphotyrosine.

It belongs to the protein kinase superfamily. Ser/Thr protein kinase family. CRK subfamily.

The protein localises to the membrane. The catalysed reaction is L-seryl-[protein] + ATP = O-phospho-L-seryl-[protein] + ADP + H(+). It catalyses the reaction L-threonyl-[protein] + ATP = O-phospho-L-threonyl-[protein] + ADP + H(+). The protein is Putative cysteine-rich receptor-like protein kinase 20 (CRK20) of Arabidopsis thaliana (Mouse-ear cress).